Consider the following 213-residue polypeptide: Kynurenine formamidase (213 aa).

Tryptophan 18 serves as a coordination point for substrate. Zn(2+)-binding residues include histidine 48, histidine 52, and aspartate 54. Histidine 58 (proton donor/acceptor) is an active-site residue. Residues histidine 160 and glutamate 172 each contribute to the Zn(2+) site.

This sequence belongs to the Cyclase 1 superfamily. KynB family. Homodimer. Zn(2+) serves as cofactor.

It catalyses the reaction N-formyl-L-kynurenine + H2O = L-kynurenine + formate + H(+). Its pathway is amino-acid degradation; L-tryptophan degradation via kynurenine pathway; L-kynurenine from L-tryptophan: step 2/2. Its function is as follows. Catalyzes the hydrolysis of N-formyl-L-kynurenine to L-kynurenine, the second step in the kynurenine pathway of tryptophan degradation. This is Kynurenine formamidase from Burkholderia lata (strain ATCC 17760 / DSM 23089 / LMG 22485 / NCIMB 9086 / R18194 / 383).